Here is a 1013-residue protein sequence, read N- to C-terminus: EF-hand calcium-binding domain-containing protein 6 (1013 aa).

5 consecutive EF-hand domains span residues 20-55, 145-180, 251-286, 287-322, and 352-387; these read KNIKTVMKAFKLIDVNKTGLVRPQELRRVLETFCLK, KSYEKIEKALSAGDPCKGGYVSFNYLKIVLDTFIYQ, DRSASLKKALLIINTKPDGPITREEFRYILNCVAIK, LSDSEFKELMQILDPGDTGVVNTSMFIDLIEENCRM, and RNLQAFYNMLRSYDLGDTGLIGRNNFKKIMHVFCPF. A disordered region spans residues 441 to 460; that stretch reads QKDEQQQPDLSERTKPTEDK. 6 consecutive EF-hand domains span residues 482-517, 589-624, 695-730, 731-766, 812-847, and 917-952; these read QQDPAFKKRFLDFSKEPNGKINVHDFRKILEDTGMP, ESFRDPYSAFFKTDVDRDGIINMHDLHRLLLHLLLN, NRWSDLSKNFLETDNEGNGILRRRDIKNALYGFDIP, LTPREFEKLWARYNTEGKGHITYQEFLQKLGINYSP, DLHQDISKAFTKIDKSKTNYISICKMQKVLEECGCS, and SSQLALSTAFSALDKEDTGFVKATEFGQVLKDFCYK. The Ca(2+) site is built by D602, D604, D606, and D613. T732 bears the Phosphothreonine mark.

In terms of assembly, microtubule inner protein component of sperm flagellar doublet microtubules. Binds PARK7. Part of a ternary complex containing PARK7, EFCAB6/DJBP and AR.

The protein localises to the nucleus. The protein resides in the cytoplasm. Its subcellular location is the cytoskeleton. It is found in the flagellum axoneme. Its function is as follows. Negatively regulates the androgen receptor by recruiting histone deacetylase complex, and protein DJ-1 antagonizes this inhibition by abrogation of this complex. Microtubule inner protein (MIP) part of the dynein-decorated doublet microtubules (DMTs) in cilia axoneme, which is required for motile cilia beating. The chain is EF-hand calcium-binding domain-containing protein 6 (EFCAB6) from Pongo abelii (Sumatran orangutan).